The following is a 540-amino-acid chain: Ubiquitin carboxyl-terminal hydrolase 17-like protein E (540 aa).

The interval 1–22 is disordered; it reads MVVSLSFPEETGGENLPSAPLE. The USP domain occupies 85–382; that stretch reads CGLQNTGNSC…NAYVLFYVQQ (298 aa). Cys94 functions as the Nucleophile in the catalytic mechanism. The active-site Proton acceptor is the His341. Composition is skewed to basic and acidic residues over residues 431–441 and 508–520; these read NREKRAKKETS and APDKENQPWHNGD. Disordered regions lie at residues 431–461 and 499–540; these read NREKRAKKETSLGEGKVPQEVNHEKAGQKHG and RSTA…QGGR. Over residues 523–540 the composition is skewed to polar residues; the sequence is LTSQGLMSPGQLCSQGGR.

This sequence belongs to the peptidase C19 family. USP17 subfamily. In terms of assembly, interacts with SUDS3; the interaction is direct.

Its subcellular location is the nucleus. The protein localises to the endoplasmic reticulum. The catalysed reaction is Thiol-dependent hydrolysis of ester, thioester, amide, peptide and isopeptide bonds formed by the C-terminal Gly of ubiquitin (a 76-residue protein attached to proteins as an intracellular targeting signal).. Its function is as follows. Deubiquitinating enzyme that removes conjugated ubiquitin from specific proteins to regulate different cellular processes that may include cell proliferation, progression through the cell cycle, apoptosis, cell migration, and the cellular response to viral infection. In Mus musculus (Mouse), this protein is Ubiquitin carboxyl-terminal hydrolase 17-like protein E (Usp17le).